The sequence spans 734 residues: Ribosomal RNA large subunit methyltransferase K/L (734 aa).

The THUMP domain maps to 49–167 (QAYRVCMWSR…KTEHTYCLDL (119 aa)).

Belongs to the methyltransferase superfamily. RlmKL family.

The protein resides in the cytoplasm. It carries out the reaction guanosine(2445) in 23S rRNA + S-adenosyl-L-methionine = N(2)-methylguanosine(2445) in 23S rRNA + S-adenosyl-L-homocysteine + H(+). It catalyses the reaction guanosine(2069) in 23S rRNA + S-adenosyl-L-methionine = N(2)-methylguanosine(2069) in 23S rRNA + S-adenosyl-L-homocysteine + H(+). In terms of biological role, specifically methylates the guanine in position 2445 (m2G2445) and the guanine in position 2069 (m7G2069) of 23S rRNA. The chain is Ribosomal RNA large subunit methyltransferase K/L from Acinetobacter baylyi (strain ATCC 33305 / BD413 / ADP1).